Here is a 341-residue protein sequence, read N- to C-terminus: ATP-dependent 6-phosphofructokinase 3 (341 aa).

ATP is bound by residues glycine 10, 72 to 73 (RV), and 102 to 105 (GEGT). Mg(2+) is bound at residue glutamate 103. Substrate contacts are provided by residues 125 to 127 (TID), arginine 162, 169 to 171 (MGR), glutamate 222, arginine 266, and 272 to 275 (HVQR). Aspartate 127 (proton acceptor) is an active-site residue.

Belongs to the phosphofructokinase type A (PFKA) family. Mixed-substrate PFK group III subfamily. In terms of assembly, homodimer or homotetramer. It depends on Mg(2+) as a cofactor.

Its subcellular location is the cytoplasm. The catalysed reaction is beta-D-fructose 6-phosphate + ATP = beta-D-fructose 1,6-bisphosphate + ADP + H(+). Its pathway is carbohydrate degradation; glycolysis; D-glyceraldehyde 3-phosphate and glycerone phosphate from D-glucose: step 3/4. Its function is as follows. Catalyzes the phosphorylation of D-fructose 6-phosphate to fructose 1,6-bisphosphate by ATP, the first committing step of glycolysis. This Streptomyces coelicolor (strain ATCC BAA-471 / A3(2) / M145) protein is ATP-dependent 6-phosphofructokinase 3.